Here is a 320-residue protein sequence, read N- to C-terminus: Cytochrome c biogenesis protein CcsA (320 aa).

The next 8 helical transmembrane spans lie at 15–35, 43–63, 71–91, 98–118, 143–163, 224–244, 251–271, and 285–305; these read FSIVSIVITIHLITLLVDEII, KGMIAIFLCITGLLVTRWIYS, LYESLIFLSWSLSVIHIVPYF, LSTITASSVIFTQGFATSGLL, MILSYAALLCGSLLSVALLVI, VISLGFIFLTIGILSGAVWAN, WNWDPKETWAFITWIVFAIYL, and AIVASIGFLIIWICYFGVNLL.

This sequence belongs to the CcmF/CycK/Ccl1/NrfE/CcsA family. May interact with Ccs1.

It is found in the plastid. Its subcellular location is the chloroplast thylakoid membrane. In terms of biological role, required during biogenesis of c-type cytochromes (cytochrome c6 and cytochrome f) at the step of heme attachment. The polypeptide is Cytochrome c biogenesis protein CcsA (Panax ginseng (Korean ginseng)).